The sequence spans 314 residues: Ribosomal RNA small subunit methyltransferase H (314 aa).

S-adenosyl-L-methionine contacts are provided by residues 31 to 33, aspartate 49, phenylalanine 76, aspartate 118, and glutamine 125; that span reads GGY.

Belongs to the methyltransferase superfamily. RsmH family.

The protein localises to the cytoplasm. It catalyses the reaction cytidine(1402) in 16S rRNA + S-adenosyl-L-methionine = N(4)-methylcytidine(1402) in 16S rRNA + S-adenosyl-L-homocysteine + H(+). In terms of biological role, specifically methylates the N4 position of cytidine in position 1402 (C1402) of 16S rRNA. The protein is Ribosomal RNA small subunit methyltransferase H of Wolbachia pipientis wMel.